The sequence spans 1366 residues: DNA-directed RNA polymerase subunit beta' (1366 aa).

The span at 1 to 23 (MTSSKPKKSSRVRKTTKNSKKNH) shows a compositional bias: basic residues. The tract at residues 1–37 (MTSSKPKKSSRVRKTTKNSKKNHNTMMPLLPKTPPSF) is disordered. Zn(2+) contacts are provided by C248, C315, C322, and C325. The segment at 1304–1366 (TAILDDPSDE…LQEEGLLSDG (63 aa)) is disordered. Positions 1354–1366 (LEGLQEEGLLSDG) are enriched in low complexity.

It belongs to the RNA polymerase beta' chain family. RpoC2 subfamily. As to quaternary structure, in cyanobacteria the RNAP catalytic core is composed of 2 alpha, 1 beta, 1 beta', 1 gamma and 1 omega subunit. When a sigma factor is associated with the core the holoenzyme is formed, which can initiate transcription. Zn(2+) is required as a cofactor.

The catalysed reaction is RNA(n) + a ribonucleoside 5'-triphosphate = RNA(n+1) + diphosphate. DNA-dependent RNA polymerase catalyzes the transcription of DNA into RNA using the four ribonucleoside triphosphates as substrates. The sequence is that of DNA-directed RNA polymerase subunit beta' from Prochlorococcus marinus subsp. pastoris (strain CCMP1986 / NIES-2087 / MED4).